A 60-amino-acid chain; its full sequence is Large ribosomal subunit protein bL32 (60 aa).

Positions 1 to 21 are disordered; it reads MAVQQNKKSPSKRGMHRAHNA. Positions 9-19 are enriched in basic residues; that stretch reads SPSKRGMHRAH.

This sequence belongs to the bacterial ribosomal protein bL32 family.

The chain is Large ribosomal subunit protein bL32 from Albidiferax ferrireducens (strain ATCC BAA-621 / DSM 15236 / T118) (Rhodoferax ferrireducens).